Consider the following 1291-residue polypeptide: DNA-directed RNA polymerase subunit beta' (1291 aa).

Positions 60, 62, 75, and 78 each coordinate Zn(2+). Residues aspartate 535, aspartate 537, and aspartate 539 each coordinate Mg(2+). Zn(2+) contacts are provided by cysteine 878, cysteine 954, cysteine 961, and cysteine 964.

Belongs to the RNA polymerase beta' chain family. The RNAP catalytic core consists of 2 alpha, 1 beta, 1 beta' and 1 omega subunit. When a sigma factor is associated with the core the holoenzyme is formed, which can initiate transcription. The cofactor is Mg(2+). Zn(2+) serves as cofactor.

The catalysed reaction is RNA(n) + a ribonucleoside 5'-triphosphate = RNA(n+1) + diphosphate. In terms of biological role, DNA-dependent RNA polymerase catalyzes the transcription of DNA into RNA using the four ribonucleoside triphosphates as substrates. The protein is DNA-directed RNA polymerase subunit beta' of Thermobifida fusca (strain YX).